A 221-amino-acid chain; its full sequence is Interleukin-12 subunit alpha (221 aa).

An N-terminal signal peptide occupies residues 1–25 (MCPLRSLLLISTLVLLHHLPHLSLG). Intrachain disulfides connect cysteine 39–cysteine 112, cysteine 66–cysteine 198, and cysteine 87–cysteine 125. Asparagine 95 is a glycosylation site (N-linked (GlcNAc...) asparagine).

Belongs to the IL-6 superfamily. As to quaternary structure, heterodimer with IL12B; disulfide-linked. This heterodimer is known as interleukin IL-12. Heterodimer with EBI3/IL27B; not disulfide-linked. This heterodimer is known as interleukin IL-35. Interacts with NBR1; this interaction promotes IL-12 secretion.

Its subcellular location is the secreted. In terms of biological role, heterodimerizes with IL12B to form the IL-12 cytokine or with EBI3/IL27B to form the IL-35 cytokine. IL-12 is primarily produced by professional antigen-presenting cells (APCs) such as B-cells and dendritic cells (DCs) as well as macrophages and granulocytes and regulates T-cell and natural killer-cell responses, induces the production of interferon-gamma (IFN-gamma), favors the differentiation of T-helper 1 (Th1) cells and is an important link between innate resistance and adaptive immunity. Mechanistically, exerts its biological effects through a receptor composed of IL12R1 and IL12R2 subunits. Binding to the receptor results in the rapid tyrosine phosphorylation of a number of cellular substrates including the JAK family kinases TYK2 and JAK2. In turn, recruited STAT4 gets phosphorylated and translocates to the nucleus where it regulates cytokine/growth factor responsive genes. As part of IL-35, plays essential roles in maintaining the immune homeostasis of the liver microenvironment and also functions as an immune-suppressive cytokine. Mediates biological events through unconventional receptors composed of IL12RB2 and gp130/IL6ST heterodimers or homodimers. Signaling requires the transcription factors STAT1 and STAT4, which form a unique heterodimer that binds to distinct DNA sites. This chain is Interleukin-12 subunit alpha (IL12A), found in Ovis aries (Sheep).